Here is a 255-residue protein sequence, read N- to C-terminus: MINAPLHARQTLDLAGFRPQADARPVEWLISEAPVPYPDAVAAMESRAAAIAAGDAAELVWLLEHPPLYTSGTSGQSTDLLDPRFPLHTTGRGGQLTYHGPGQRVAYVMLDLKRRRPDVRAYVAALEQWIIATLDAFNVRGERRENRVGVWVARPDKGADHEDKIAAIGVRLKRWVSLHGIAINVEPDLSHFTAIVPCGISDPRYGVTSLVDLGLPVTMADADIALRAAFTEIFGATVDAPQVDPAVDAGARSPA.

The region spanning 54–238 (GDAAELVWLL…AFTEIFGATV (185 aa)) is the BPL/LPL catalytic domain. Substrate contacts are provided by residues 92-99 (RGGQLTYH), 167-169 (AIG), and 180-182 (GIA). Cys-198 functions as the Acyl-thioester intermediate in the catalytic mechanism.

Belongs to the LipB family.

The protein localises to the cytoplasm. It carries out the reaction octanoyl-[ACP] + L-lysyl-[protein] = N(6)-octanoyl-L-lysyl-[protein] + holo-[ACP] + H(+). It functions in the pathway protein modification; protein lipoylation via endogenous pathway; protein N(6)-(lipoyl)lysine from octanoyl-[acyl-carrier-protein]: step 1/2. Catalyzes the transfer of endogenously produced octanoic acid from octanoyl-acyl-carrier-protein onto the lipoyl domains of lipoate-dependent enzymes. Lipoyl-ACP can also act as a substrate although octanoyl-ACP is likely to be the physiological substrate. The chain is Octanoyltransferase from Rhodopseudomonas palustris (strain HaA2).